A 781-amino-acid chain; its full sequence is Probable serine/threonine-protein kinase C70.05c (781 aa).

Disordered stretches follow at residues 1 to 315 (MPSD…PLVS) and 368 to 417 (YSGK…TNIS). The segment covering 21–31 (ESPSSRSIGSG) has biased composition (low complexity). A compositionally biased stretch (polar residues) spans 43-63 (FKNSFLSRKNSSQIKSPSDYK). Over residues 64 to 73 (SSAHEQRVNH) the composition is skewed to basic and acidic residues. The segment covering 74-92 (TTDSMAHVPGNNSPLQTPQ) has biased composition (polar residues). Ser94 bears the Phosphoserine mark. The segment covering 112–121 (SRHHKPHHSG) has biased composition (basic residues). Composition is skewed to polar residues over residues 136-146 (SNANSPTSESP), 161-195 (KNTS…PNSR), and 206-228 (NSAS…SLSR). Residue Ser253 is modified to Phosphoserine. A compositionally biased stretch (low complexity) spans 272–304 (PLTASPTPSSPTGTPNSMSKSPSLSSLASTGAS). Over residues 379 to 406 (NVGSSANTAPNSPTSANSSEGNQGNGPT) the composition is skewed to polar residues. In terms of domain architecture, Protein kinase spans 432–742 (AKRVVPRLSA…AQEALNLPFV (311 aa)). ATP-binding positions include 452–460 (MGSGATAVI) and Lys480. Asp584 (proton acceptor) is an active-site residue.

Belongs to the protein kinase superfamily. Ser/Thr protein kinase family.

Its subcellular location is the cytoplasm. The enzyme catalyses L-seryl-[protein] + ATP = O-phospho-L-seryl-[protein] + ADP + H(+). It carries out the reaction L-threonyl-[protein] + ATP = O-phospho-L-threonyl-[protein] + ADP + H(+). The chain is Probable serine/threonine-protein kinase C70.05c from Schizosaccharomyces pombe (strain 972 / ATCC 24843) (Fission yeast).